The sequence spans 106 residues: Non-histone chromosomal protein 6 (106 aa).

Over residues 1-11 the composition is skewed to basic residues; it reads MPKANPTRKTK. 2 disordered regions span residues 1–33 and 60–106; these read MPKA…GLSA and MLGE…EESS. 2 stretches are compositionally biased toward basic and acidic residues: residues 12-26 and 61-93; these read ATRE…DPNA and LGEK…EKAA. The segment at residues 27-95 is a DNA-binding region (HMG box); that stretch reads PKRGLSAYMF…RYEDEKAAYK (69 aa).

The protein belongs to the NHP6 family. As to quaternary structure, weakly associates with the stable spt16-pob3 heterodimer to form the FACT complex.

The protein localises to the nucleus. The protein resides in the chromosome. DNA-binding protein that induces severe bending of DNA. Required for DNA-binding by the FACT complex, a general chromatin factor that acts to reorganize nucleosomes. The FACT complex is involved in multiple processes that require DNA as a template such as mRNA elongation, DNA replication and DNA repair. Also augments the fidelity of transcription by RNA polymerase III independently of any role in the FACT complex. In Emericella nidulans (strain FGSC A4 / ATCC 38163 / CBS 112.46 / NRRL 194 / M139) (Aspergillus nidulans), this protein is Non-histone chromosomal protein 6 (nhp6).